The following is a 195-amino-acid chain: Large ribosomal subunit protein eL6 (195 aa).

Residues serine 105 and serine 115 each carry the phosphoserine modification.

This sequence belongs to the eukaryotic ribosomal protein eL6 family. Component of the large ribosomal subunit (LSU). Mature yeast ribosomes consist of a small (40S) and a large (60S) subunit. The 40S small subunit contains 1 molecule of ribosomal RNA (18S rRNA) and at least 33 different proteins. The large 60S subunit contains 3 rRNA molecules (25S, 5.8S and 5S rRNA) and at least 46 different proteins.

It localises to the cytoplasm. The protein resides in the nucleus. It is found in the nucleolus. Functionally, component of the ribosome, a large ribonucleoprotein complex responsible for the synthesis of proteins in the cell. The small ribosomal subunit (SSU) binds messenger RNAs (mRNAs) and translates the encoded message by selecting cognate aminoacyl-transfer RNA (tRNA) molecules. The large subunit (LSU) contains the ribosomal catalytic site termed the peptidyl transferase center (PTC), which catalyzes the formation of peptide bonds, thereby polymerizing the amino acids delivered by tRNAs into a polypeptide chain. The nascent polypeptides leave the ribosome through a tunnel in the LSU and interact with protein factors that function in enzymatic processing, targeting, and the membrane insertion of nascent chains at the exit of the ribosomal tunnel. The sequence is that of Large ribosomal subunit protein eL6 (rpl6) from Schizosaccharomyces pombe (strain 972 / ATCC 24843) (Fission yeast).